The following is a 422-amino-acid chain: Putative polyketide beta-ketoacyl synthase 1 (422 aa).

The Ketosynthase family 3 (KS3) domain occupies 2–416; sequence SRRVVVTGIG…GFQSAVVLTG (415 aa). Residues Cys-169, His-309, and His-346 each act as for beta-ketoacyl synthase activity in the active site.

The protein belongs to the thiolase-like superfamily. Beta-ketoacyl-ACP synthases family.

Its function is as follows. Involved in developmentally regulated synthesis of a compound biosynthetically related to polyketide antibiotics which is essential for spore color in Streptomyces halstedii. In Streptomyces halstedii, this protein is Putative polyketide beta-ketoacyl synthase 1 (sch1).